The following is a 260-amino-acid chain: MLIIPAIDIKDGKCVRLTRGEFDKKKIYLDNPRDMAIIWRKQNAKMIHIVDLDAALTGKLVNFEKIREIVTDLDIPVQVGGGLRSVDAVEKYLDIGVSRVVIGSAAVTNPGLVEDLLKRYSPSQIVVGIDAENGIPKIKGWTESSGMQDYELALQMKKLGVKRIIYTDIACDGMMQGVGFESTKRFVEKAGMRVTASGGVTGSEDLRKLQTLEKYGVDSVIIGKALYENNFSCQKLWYNFEKCIGIDCDFSTALKKECCS.

The active-site Proton acceptor is D8. D130 serves as the catalytic Proton donor.

It belongs to the HisA/HisF family.

The protein resides in the cytoplasm. It catalyses the reaction 1-(5-phospho-beta-D-ribosyl)-5-[(5-phospho-beta-D-ribosylamino)methylideneamino]imidazole-4-carboxamide = 5-[(5-phospho-1-deoxy-D-ribulos-1-ylimino)methylamino]-1-(5-phospho-beta-D-ribosyl)imidazole-4-carboxamide. The protein operates within amino-acid biosynthesis; L-histidine biosynthesis; L-histidine from 5-phospho-alpha-D-ribose 1-diphosphate: step 4/9. This Chlorobium phaeobacteroides (strain BS1) protein is 1-(5-phosphoribosyl)-5-[(5-phosphoribosylamino)methylideneamino] imidazole-4-carboxamide isomerase.